The following is a 180-amino-acid chain: Inner membrane-spanning protein YciB (180 aa).

5 consecutive transmembrane segments (helical) span residues 11 to 31, 52 to 72, 76 to 96, 121 to 141, and 149 to 169; these read ILFF…ALII, IIMG…NKVE, WKVT…QYGF, LAWA…SQYC, and FKSF…GIYV.

Belongs to the YciB family.

Its subcellular location is the cell inner membrane. In terms of biological role, plays a role in cell envelope biogenesis, maintenance of cell envelope integrity and membrane homeostasis. The polypeptide is Inner membrane-spanning protein YciB (Mannheimia succiniciproducens (strain KCTC 0769BP / MBEL55E)).